The primary structure comprises 395 residues: Chorismate synthase (395 aa).

Residues arginine 40 and arginine 46 each contribute to the NADP(+) site. Residues 134-136, 256-257, glycine 301, 316-320, and arginine 342 each bind FMN; these read RAS, QA, and KPIST.

Belongs to the chorismate synthase family. In terms of assembly, homotetramer. FMNH2 serves as cofactor.

It carries out the reaction 5-O-(1-carboxyvinyl)-3-phosphoshikimate = chorismate + phosphate. It participates in metabolic intermediate biosynthesis; chorismate biosynthesis; chorismate from D-erythrose 4-phosphate and phosphoenolpyruvate: step 7/7. Catalyzes the anti-1,4-elimination of the C-3 phosphate and the C-6 proR hydrogen from 5-enolpyruvylshikimate-3-phosphate (EPSP) to yield chorismate, which is the branch point compound that serves as the starting substrate for the three terminal pathways of aromatic amino acid biosynthesis. This reaction introduces a second double bond into the aromatic ring system. The chain is Chorismate synthase from Beutenbergia cavernae (strain ATCC BAA-8 / DSM 12333 / CCUG 43141 / JCM 11478 / NBRC 16432 / NCIMB 13614 / HKI 0122).